The primary structure comprises 344 residues: Anthranilate phosphoribosyltransferase (344 aa).

5-phospho-alpha-D-ribose 1-diphosphate contacts are provided by residues glycine 84, 87 to 88, threonine 92, 94 to 97, 112 to 120, and serine 124; these read GD, NIST, and KHGNRSVSS. Glycine 84 contacts anthranilate. A Mg(2+)-binding site is contributed by serine 96. Asparagine 115 lines the anthranilate pocket. Residue arginine 170 coordinates anthranilate. The Mg(2+) site is built by aspartate 229 and glutamate 230.

Belongs to the anthranilate phosphoribosyltransferase family. In terms of assembly, homodimer. Mg(2+) is required as a cofactor.

It carries out the reaction N-(5-phospho-beta-D-ribosyl)anthranilate + diphosphate = 5-phospho-alpha-D-ribose 1-diphosphate + anthranilate. It participates in amino-acid biosynthesis; L-tryptophan biosynthesis; L-tryptophan from chorismate: step 2/5. In terms of biological role, catalyzes the transfer of the phosphoribosyl group of 5-phosphorylribose-1-pyrophosphate (PRPP) to anthranilate to yield N-(5'-phosphoribosyl)-anthranilate (PRA). The protein is Anthranilate phosphoribosyltransferase of Xylella fastidiosa (strain 9a5c).